The primary structure comprises 488 residues: L-arabinose isomerase 2 (488 aa).

Mn(2+) is bound by residues Glu306, Glu331, His348, and His447.

It belongs to the arabinose isomerase family. Mn(2+) is required as a cofactor.

The catalysed reaction is beta-L-arabinopyranose = L-ribulose. The protein operates within carbohydrate degradation; L-arabinose degradation via L-ribulose; D-xylulose 5-phosphate from L-arabinose (bacterial route): step 1/3. Catalyzes the conversion of L-arabinose to L-ribulose. The polypeptide is L-arabinose isomerase 2 (Clostridium acetobutylicum (strain ATCC 824 / DSM 792 / JCM 1419 / IAM 19013 / LMG 5710 / NBRC 13948 / NRRL B-527 / VKM B-1787 / 2291 / W)).